The chain runs to 254 residues: Phosphoribosylaminoimidazole-succinocarboxamide synthase (254 aa).

Belongs to the SAICAR synthetase family.

It catalyses the reaction 5-amino-1-(5-phospho-D-ribosyl)imidazole-4-carboxylate + L-aspartate + ATP = (2S)-2-[5-amino-1-(5-phospho-beta-D-ribosyl)imidazole-4-carboxamido]succinate + ADP + phosphate + 2 H(+). It participates in purine metabolism; IMP biosynthesis via de novo pathway; 5-amino-1-(5-phospho-D-ribosyl)imidazole-4-carboxamide from 5-amino-1-(5-phospho-D-ribosyl)imidazole-4-carboxylate: step 1/2. In Rhizobium meliloti (strain 1021) (Ensifer meliloti), this protein is Phosphoribosylaminoimidazole-succinocarboxamide synthase.